A 479-amino-acid chain; its full sequence is Ribulose bisphosphate carboxylase large chain (479 aa).

Residues 1 to 2 constitute a propeptide that is removed on maturation; it reads MS. Asn123 and Thr173 together coordinate substrate. The active-site Proton acceptor is Lys175. Lys177 serves as a coordination point for substrate. Mg(2+) is bound by residues Lys201, Asp203, and Glu204. An N6-carboxylysine modification is found at Lys201. Residue Ser208 is modified to Phosphoserine. Catalysis depends on His294, which acts as the Proton acceptor. Positions 295 and 327 each coordinate substrate. Thr330 is subject to Phosphothreonine. Substrate is bound at residue Ser379.

The protein belongs to the RuBisCO large chain family. Type I subfamily. In terms of assembly, heterohexadecamer of 8 large chains and 8 small chains; disulfide-linked. The disulfide link is formed within the large subunit homodimers. Mg(2+) serves as cofactor. Post-translationally, the disulfide bond which can form in the large chain dimeric partners within the hexadecamer appears to be associated with oxidative stress and protein turnover.

The protein localises to the plastid. The protein resides in the chloroplast. The catalysed reaction is 2 (2R)-3-phosphoglycerate + 2 H(+) = D-ribulose 1,5-bisphosphate + CO2 + H2O. It carries out the reaction D-ribulose 1,5-bisphosphate + O2 = 2-phosphoglycolate + (2R)-3-phosphoglycerate + 2 H(+). Functionally, ruBisCO catalyzes two reactions: the carboxylation of D-ribulose 1,5-bisphosphate, the primary event in carbon dioxide fixation, as well as the oxidative fragmentation of the pentose substrate in the photorespiration process. Both reactions occur simultaneously and in competition at the same active site. The polypeptide is Ribulose bisphosphate carboxylase large chain (Lobularia maritima (Sweet alyssum)).